Reading from the N-terminus, the 493-residue chain is Insulinoma-associated protein 2 (493 aa).

Over residues 1 to 12 the composition is skewed to basic residues; that stretch reads MPRGFLVKRTKR. Residues 1 to 20 form an SNAG domain region; sequence MPRGFLVKRTKRSGSSYRAR. A disordered region spans residues 1–77; it reads MPRGFLVKRT…PGPSPARPAG (77 aa). The C2H2-type 1; atypical zinc finger occupies 203 to 223; the sequence is FICQLCKHQYADPFALAQHRC. Residues 231–253 form a C2H2-type 2 zinc finger; it reads YRCPECDKVFSCPANLASHRRWH. Residues 248 to 310 are disordered; the sequence is SHRRWHKPRP…SGDGQHRDSA (63 aa). Residues 267 to 276 are compositionally biased toward pro residues; the sequence is PHAPLTPPDP. A compositionally biased stretch (basic and acidic residues) spans 283 to 294; that stretch reads ENGRVPRTDDQH. C2H2-type zinc fingers lie at residues 354–376, 398–420, and 452–475; these read FVCP…LGTH, FACP…RLWH, and FSCK…NKCH.

Expressed in spleen, stomach, liver, kidney and testis. In the pancreas, expressed in islet cells, including insulin-producing beta-cells, but not in acinar cells (at protein level). In the brain, expressed in the neuronal cells of the cerebral cortex, the Purkinje cells of the cerebellum and the hippocampal region including CA1 and CA3 (at protein level).

Its subcellular location is the cytoplasm. The protein resides in the nucleus. In terms of biological role, may function as a growth suppressor or tumor suppressor in liver cells and in certain neurons. The chain is Insulinoma-associated protein 2 (Insm2) from Mus musculus (Mouse).